The sequence spans 233 residues: 7-cyano-7-deazaguanine synthase (233 aa).

Leu-13 to Leu-23 lines the ATP pocket. Residues Cys-197, Cys-206, Cys-209, and Cys-212 each coordinate Zn(2+).

The protein belongs to the QueC family. The cofactor is Zn(2+).

The catalysed reaction is 7-carboxy-7-deazaguanine + NH4(+) + ATP = 7-cyano-7-deazaguanine + ADP + phosphate + H2O + H(+). It participates in purine metabolism; 7-cyano-7-deazaguanine biosynthesis. Catalyzes the ATP-dependent conversion of 7-carboxy-7-deazaguanine (CDG) to 7-cyano-7-deazaguanine (preQ(0)). The protein is 7-cyano-7-deazaguanine synthase of Anaeromyxobacter sp. (strain Fw109-5).